The primary structure comprises 399 residues: MSQYRTFTASDAVAYAQQFGGLSAPEALVSAQEVGDGNLNLVFKIFDKQGISRIVVKQALPYVRCVGESWPLTLDRARLEAQTLVAHYQHCPAHTVKIHHYDPTLAVMVMEDLSDHRIWRGELIKGVHYPQAARQLGEYLAQTLFHTSDFYLHPHAKKAEVARFINPEMCEITEDLFFNDPYQVHERNNYPAELEADVAALRDDAALKCAVAALKHRFFSHAEALLHGDIHSGSIFVADGSLKAIDAEFGYFGPVGFDVGTAIGNLLLNYCGAPGQLGIREAADAREQRLIDIATLWHTFAERFQTLAREKTRDAALAEPGYASEFLKKVWADAIGFAGTELIRRSVGLSHVADIDTIRDEEMKLSCLRHAIGLGKALILLAPRIENADEFIARVRQYG.

ATP is bound by residues asparagine 40, lysine 57, and 111 to 113 (EDL). Aspartate 229 provides a ligand contact to substrate. 246–248 (DAE) is a binding site for ATP. Residue arginine 344 coordinates substrate.

Belongs to the methylthioribose kinase family. Homodimer.

It catalyses the reaction 5-(methylsulfanyl)-D-ribose + ATP = 5-(methylsulfanyl)-alpha-D-ribose 1-phosphate + ADP + H(+). Its pathway is amino-acid biosynthesis; L-methionine biosynthesis via salvage pathway; S-methyl-5-thio-alpha-D-ribose 1-phosphate from S-methyl-5'-thioadenosine (hydrolase route): step 2/2. In terms of biological role, catalyzes the phosphorylation of methylthioribose into methylthioribose-1-phosphate. The chain is Methylthioribose kinase from Cronobacter sakazakii (strain ATCC BAA-894) (Enterobacter sakazakii).